Here is a 768-residue protein sequence, read N- to C-terminus: Solabiose phosphorylase (768 aa).

Catalysis depends on D456, which acts as the Proton donor.

Belongs to the glycosyl hydrolase 94 family.

It carries out the reaction solabiose + phosphate = D-galactose + alpha-D-glucose 1-phosphate. Its function is as follows. Catalyzes the reversible phosphorolysis of solabiose. Catalyzes the phosphorolysis and synthesis of solabiose through a sequential bi-bi mechanism involving the formation of a ternary complex. Is probably involved in the metabolism of solabiose released from solabiose-containing compounds. The sequence is that of Solabiose phosphorylase from Paenibacillus borealis.